Reading from the N-terminus, the 270-residue chain is Phospholipase A and acyltransferase 5 (270 aa).

2 disordered regions span residues 1-54 and 70-122; these read MGLS…SASS and RRLE…NPRP. Polar residues-rich tracts occupy residues 24 to 54 and 100 to 116; these read TQIS…SASS and IPTS…NQAV. Residues 127-240 enclose the LRAT domain; that stretch reads LIEIFRIGYE…LRYGVPRSQQ (114 aa). Residues histidine 137 and histidine 149 contribute to the active site. The active-site Acyl-thioester intermediate is the cysteine 224.

The protein belongs to the H-rev107 family. Isoform 4 shows highest expression level in testis.

Its subcellular location is the cytoplasm. The protein localises to the cytosol. The catalysed reaction is a 1,2-diacyl-sn-glycero-3-phosphocholine + H2O = a 1-acyl-sn-glycero-3-phosphocholine + a fatty acid + H(+). It carries out the reaction a 1,2-diacyl-sn-glycero-3-phosphocholine + H2O = a 2-acyl-sn-glycero-3-phosphocholine + a fatty acid + H(+). It catalyses the reaction 1-hexadecanoyl-2-(5Z,8Z,11Z,14Z-eicosatetraenoyl)-sn-glycero-3-phosphocholine + 1,2-di-(9Z-octadecenoyl)-sn-glycero-3-phosphoethanolamine = N-(5Z,8Z,11Z,14Z-eicosatetraenoyl)-1,2-di-(9Z-octadecenoyl)-sn-glycero-3-phosphoethanolamine + 1-hexadecanoyl-sn-glycero-3-phosphocholine + H(+). The enzyme catalyses 1,2-di-(9Z-octadecenoyl)-sn-glycero-3-phosphoethanolamine + 1,2-dihexadecanoyl-sn-glycero-3-phosphocholine = N-hexadecanoyl-1,2-di-(9Z-octadecenoyl)-sn-glycero-3-phosphoethanolamine + 1-hexadecanoyl-sn-glycero-3-phosphocholine + H(+). The catalysed reaction is 1,2-di-(9Z-octadecenoyl)-sn-glycero-3-phosphoethanolamine + 1,2-dihexadecanoyl-sn-glycero-3-phosphocholine = N-hexadecanoyl-1,2-di-(9Z-octadecenoyl)-sn-glycero-3-phosphoethanolamine + 2-hexadecanoyl-sn-glycero-3-phosphocholine + H(+). It carries out the reaction a 1,2-diacyl-sn-glycero-3-phosphoethanolamine + a 1,2-diacyl-sn-glycero-3-phosphocholine = an N-acyl-1,2-diacyl-sn-glycero-3-phosphoethanolamine + a 1-acyl-sn-glycero-3-phosphocholine + H(+). It catalyses the reaction a 1,2-diacyl-sn-glycero-3-phosphoethanolamine + a 1,2-diacyl-sn-glycero-3-phosphocholine = an N-acyl-1,2-diacyl-sn-glycero-3-phosphoethanolamine + a 2-acyl-sn-glycero-3-phosphocholine + H(+). The enzyme catalyses 1-hexadecanoyl-2-(9Z-octadecenoyl)-sn-glycero-3-phosphocholine + 1,2-di-(9Z-octadecenoyl)-sn-glycero-3-phosphoethanolamine = N,1,2-tri-(9Z-octadecenoyl)-sn-glycero-3-phosphoethanolamine + 1-hexadecanoyl-sn-glycero-3-phosphocholine + H(+). In terms of biological role, exhibits both phospholipase A1/2 and acyltransferase activities. Shows phospholipase A1 (PLA1) and A2 (PLA2) activity, catalyzing the calcium-independent release of fatty acids from the sn-1 or sn-2 position of glycerophospholipids. Shows N-acyltransferase activity, catalyzing the calcium-independent transfer of a fatty acyl group at the sn-1 position of phosphatidylcholine (PC) and other glycerophospholipids to the primary amine of phosphatidylethanolamine (PE), forming N-acylphosphatidylethanolamine (NAPE), which serves as precursor for N-acylethanolamines (NAEs). The sequence is that of Phospholipase A and acyltransferase 5 from Mus musculus (Mouse).